The chain runs to 85 residues: RNA-binding protein Hfq (85 aa).

Residues 10–69 (DPFLNILRKEHVPVSIYLVNGIKLQGQIESFDQYVVLLKNTVTQMVYKHAISTVVPARPV) enclose the Sm domain.

It belongs to the Hfq family. As to quaternary structure, homohexamer.

Its function is as follows. RNA chaperone that binds small regulatory RNA (sRNAs) and mRNAs to facilitate mRNA translational regulation in response to envelope stress, environmental stress and changes in metabolite concentrations. Also binds with high specificity to tRNAs. The sequence is that of RNA-binding protein Hfq from Laribacter hongkongensis (strain HLHK9).